The primary structure comprises 515 residues: Galactose/methyl galactoside import ATP-binding protein MglA (515 aa).

ABC transporter domains follow at residues 8–243 (LEMR…VGRE) and 254–499 (IPKE…AKYL). ATP is bound at residue 40–47 (GENGAGKS).

It belongs to the ABC transporter superfamily. Galactose/methyl galactoside importer (TC 3.A.1.2.3) family. In terms of assembly, the complex is composed of one ATP-binding protein (MglA), two transmembrane proteins (MglC) and a solute-binding protein (MglB).

It is found in the cell membrane. It carries out the reaction D-galactose(out) + ATP + H2O = D-galactose(in) + ADP + phosphate + H(+). It catalyses the reaction methyl beta-D-galactoside(out) + ATP + H2O = methyl beta-D-galactoside(in) + ADP + phosphate + H(+). Part of the ABC transporter complex MglABC involved in galactose/methyl galactoside import. Responsible for energy coupling to the transport system. The polypeptide is Galactose/methyl galactoside import ATP-binding protein MglA (Clostridium perfringens (strain 13 / Type A)).